A 437-amino-acid chain; its full sequence is Glutamate-1-semialdehyde 2,1-aminomutase (437 aa).

Residue Lys274 is modified to N6-(pyridoxal phosphate)lysine.

It belongs to the class-III pyridoxal-phosphate-dependent aminotransferase family. HemL subfamily. Homodimer. It depends on pyridoxal 5'-phosphate as a cofactor.

It localises to the cytoplasm. The catalysed reaction is (S)-4-amino-5-oxopentanoate = 5-aminolevulinate. It functions in the pathway porphyrin-containing compound metabolism; protoporphyrin-IX biosynthesis; 5-aminolevulinate from L-glutamyl-tRNA(Glu): step 2/2. The protein is Glutamate-1-semialdehyde 2,1-aminomutase of Paracidovorax citrulli (strain AAC00-1) (Acidovorax citrulli).